Reading from the N-terminus, the 308-residue chain is Mitochondrial import receptor subunit TOM40B (308 aa).

The disordered stretch occupies residues 1-29 (MGNTLGLAPMGTLPRRSHRREEPLPNPGS). The required for mitochondrial targeting stretch occupies residues 281 to 308 (PLPVTLALGAFLNHWRNRFHCGFSITVG).

The protein belongs to the Tom40 family. Forms part of the preprotein translocase of the outer mitochondrial membrane (TOM complex) containing TOMM22, TOMM40, TOMM40L and TOMM70. Interacts with mitochondrial targeting sequences.

It is found in the mitochondrion outer membrane. Potential channel-forming protein implicated in import of protein precursors into mitochondria. This Mus musculus (Mouse) protein is Mitochondrial import receptor subunit TOM40B (Tomm40l).